A 655-amino-acid chain; its full sequence is Cyclomaltodextrin glucanotransferase (655 aa).

A signal peptide spans 1 to 30 (MKRNRFFNTSAAIAISIALNTFFCSMQTIA). Residues D55, N60, N61, G79, and D81 each coordinate Ca(2+). 123 to 124 (YW) contributes to the substrate binding site. A Ca(2+)-binding site is contributed by N164. Substrate-binding positions include H165 and 217–220 (NLFN). D223 contacts Ca(2+). R251 contacts substrate. Residue D253 is the Nucleophile of the active site. Residue 256–257 (KH) participates in substrate binding. A Ca(2+)-binding site is contributed by H257. E287 (proton donor) is an active-site residue. H362, D436, and R440 together coordinate substrate. The region spanning 554 to 655 (AENPTVQSIN…NDTQTTNGSF (102 aa)) is the CBM20 domain. Residues 630–655 (TANVEWQSGANNQFNSNDTQTTNGSF) are disordered.

Belongs to the glycosyl hydrolase 13 family. As to quaternary structure, monomer. The cofactor is Ca(2+).

It catalyses the reaction Cyclizes part of a (1-&gt;4)-alpha-D-glucan chain by formation of a (1-&gt;4)-alpha-D-glucosidic bond.. This is Cyclomaltodextrin glucanotransferase (cgt) from Klebsiella oxytoca.